Reading from the N-terminus, the 432-residue chain is MWPQPRLPPHPAMSEKTQQGKLAAAKKKLKAYWQRKSPGIPAGANRKKKINGSSPDTFTSGGYHSPGDSATGIYGEGRASSTTLQDLESQYQELAVALDSSSAIISQLTENINSLVRTSKEEKKHEIHLVQKLGRSLFKLKNQTAEPLAPQPPAGPSKMEQLQDETNHLRKELESVGRQLQAEVENNQMLSLLNRRQEERLREQEERLREQEERLCEQEERLCEQEERLREQEERLCEQEKLPGQERLLEEVEKLLEQERRQEEQERLLERERLLDEVEELLEQERLRQQDERLWQQETLRELERLRELERMLELGWEALYEQRAEPRSGFEELNNENKSTLQLEQQVKELEKSGGAEEPRGSESAAAARPVAGAPVPQGAWMCGQAGWTPQEHPGLSGEAVGTGEAAGGAGEAACHSFRAAENRELNITII.

Pro residues predominate over residues Met1–Pro11. Disordered stretches follow at residues Met1–Gly77 and Lys349–Ala411. Residues Asn51–Gly62 are compositionally biased toward polar residues. Residues Ser157 to Ser354 adopt a coiled-coil conformation. Over residues Lys349–Gly362 the composition is skewed to basic and acidic residues. Residues Ala366–Ala381 are compositionally biased toward low complexity.

Belongs to the GOLGA6 family.

The chain is Golgin subfamily A member 6-like protein 9 from Homo sapiens (Human).